The chain runs to 207 residues: Sodium/potassium-transporting ATPase subunit beta-1-interacting protein 1 (207 aa).

3 helical membrane-spanning segments follow: residues 2 to 22, 35 to 55, and 62 to 82; these read GRCD…VAAL, APIL…FGTV, and LILY…IICF. N-linked (GlcNAc...) asparagine glycosylation occurs at Asn-100. Residues 147–167 traverse the membrane as a helical segment; that stretch reads VVSSALQVFLALFGFVYACYV.

Belongs to the NKAIN family. In terms of assembly, interacts with atp1b1 C-terminus.

The protein localises to the cell membrane. This chain is Sodium/potassium-transporting ATPase subunit beta-1-interacting protein 1 (nkain1), found in Danio rerio (Zebrafish).